Reading from the N-terminus, the 157-residue chain is Small ribosomal subunit protein uS7 (157 aa).

It belongs to the universal ribosomal protein uS7 family. Part of the 30S ribosomal subunit. Contacts proteins S9 and S11.

One of the primary rRNA binding proteins, it binds directly to 16S rRNA where it nucleates assembly of the head domain of the 30S subunit. Is located at the subunit interface close to the decoding center, probably blocks exit of the E-site tRNA. In Borrelia garinii subsp. bavariensis (strain ATCC BAA-2496 / DSM 23469 / PBi) (Borreliella bavariensis), this protein is Small ribosomal subunit protein uS7.